Here is a 110-residue protein sequence, read N- to C-terminus: MTQGVEFNRLMMDMRAMKAEAMSTPKTTAAPELAPGQSSFADMLGQAIGKVHETQQASSQLANAFEIGKSGVDLTDVMIASQKASVSFQALTQVRNKLVQAYQDIMQMPV.

It belongs to the FliE family.

The protein localises to the bacterial flagellum basal body. The sequence is that of Flagellar hook-basal body complex protein FliE from Pseudomonas entomophila (strain L48).